We begin with the raw amino-acid sequence, 85 residues long: Putative membrane protein insertion efficiency factor (85 aa).

Belongs to the UPF0161 family.

Its subcellular location is the cell inner membrane. In terms of biological role, could be involved in insertion of integral membrane proteins into the membrane. This Sodalis glossinidius (strain morsitans) protein is Putative membrane protein insertion efficiency factor.